The chain runs to 297 residues: tRNA-cytidine(32) 2-sulfurtransferase (297 aa).

A PP-loop motif motif is present at residues 45–50 (SGGKDS). Cysteine 120, cysteine 123, and cysteine 211 together coordinate [4Fe-4S] cluster.

Belongs to the TtcA family. In terms of assembly, homodimer. Requires Mg(2+) as cofactor. It depends on [4Fe-4S] cluster as a cofactor.

Its subcellular location is the cytoplasm. The catalysed reaction is cytidine(32) in tRNA + S-sulfanyl-L-cysteinyl-[cysteine desulfurase] + AH2 + ATP = 2-thiocytidine(32) in tRNA + L-cysteinyl-[cysteine desulfurase] + A + AMP + diphosphate + H(+). The protein operates within tRNA modification. In terms of biological role, catalyzes the ATP-dependent 2-thiolation of cytidine in position 32 of tRNA, to form 2-thiocytidine (s(2)C32). The sulfur atoms are provided by the cysteine/cysteine desulfurase (IscS) system. This Vibrio parahaemolyticus serotype O3:K6 (strain RIMD 2210633) protein is tRNA-cytidine(32) 2-sulfurtransferase.